Reading from the N-terminus, the 579-residue chain is ATP-dependent lipid A-core flippase (579 aa).

4 helical membrane passes run 24-44, 61-81, 147-167, and 253-273; these read FLAA…LAEM, LMLP…TFLG, LFVI…TLIF, and LLVA…ALMA. An ABC transmembrane type-1 domain is found at 25-306; sequence LAAVVGYAIY…LTEVNSTIQK (282 aa). The ABC transporter domain occupies 338–573; it reads VRFEGVRFRY…DGAYAALHQL (236 aa). Residue 372–379 participates in ATP binding; sequence GRSGSGKS.

Belongs to the ABC transporter superfamily. Lipid exporter (TC 3.A.1.106) family. Homodimer.

The protein resides in the cell inner membrane. The enzyme catalyses ATP + H2O + lipid A-core oligosaccharideSide 1 = ADP + phosphate + lipid A-core oligosaccharideSide 2.. Its function is as follows. Involved in lipopolysaccharide (LPS) biosynthesis. Translocates lipid A-core from the inner to the outer leaflet of the inner membrane. Transmembrane domains (TMD) form a pore in the inner membrane and the ATP-binding domain (NBD) is responsible for energy generation. The chain is ATP-dependent lipid A-core flippase from Chromohalobacter salexigens (strain ATCC BAA-138 / DSM 3043 / CIP 106854 / NCIMB 13768 / 1H11).